The chain runs to 204 residues: B9 domain-containing protein 1 (204 aa).

The region spanning 9-127 is the C2 B9-type domain; it reads FLLMVNGQVE…TIPMFVPEST (119 aa). Residues 182 to 204 are disordered; that stretch reads GYDTGPSDTQGVLGPSPPQSFPQ.

Belongs to the B9D family. Part of the tectonic-like complex (also named B9 complex).

The protein localises to the cytoplasm. It localises to the cytoskeleton. It is found in the cilium basal body. The protein resides in the cilium axoneme. Component of the tectonic-like complex, a complex localized at the transition zone of primary cilia and acting as a barrier that prevents diffusion of transmembrane proteins between the cilia and plasma membranes. Required for ciliogenesis and sonic hedgehog/SHH signaling. This Homo sapiens (Human) protein is B9 domain-containing protein 1 (B9D1).